A 144-amino-acid polypeptide reads, in one-letter code: Large ribosomal subunit protein uL11m (144 aa).

A mitochondrion-targeting transit peptide spans 1-32; sequence MASTRTTIIKLIVPAGKATPTPPIGPALGARG.

The protein belongs to the universal ribosomal protein uL11 family. In terms of assembly, component of the mitochondrial large ribosomal subunit (mt-LSU). Mature yeast 74S mitochondrial ribosomes consist of a small (37S) and a large (54S) subunit. The 37S small subunit contains a 15S ribosomal RNA (15S mt-rRNA) and at least 32 different proteins. The 54S large subunit contains a 21S rRNA (21S mt-rRNA) and at least 45 different proteins.

The protein resides in the mitochondrion. The protein localises to the cytoplasm. Functionally, component of the mitochondrial ribosome (mitoribosome), a dedicated translation machinery responsible for the synthesis of mitochondrial genome-encoded proteins, including at least some of the essential transmembrane subunits of the mitochondrial respiratory chain. The mitoribosomes are attached to the mitochondrial inner membrane and translation products are cotranslationally integrated into the membrane. The chain is Large ribosomal subunit protein uL11m from Schizosaccharomyces pombe (strain 972 / ATCC 24843) (Fission yeast).